We begin with the raw amino-acid sequence, 256 residues long: Type III pantothenate kinase (256 aa).

6–13 is an ATP binding site; the sequence is DAGNSRIK. Substrate-binding positions include Y90 and 97-100; that span reads GSDR. The Proton acceptor role is filled by D99. T123 serves as a coordination point for ATP. Residue T187 participates in substrate binding.

It belongs to the type III pantothenate kinase family. Homodimer. NH4(+) serves as cofactor. It depends on K(+) as a cofactor.

The protein localises to the cytoplasm. The catalysed reaction is (R)-pantothenate + ATP = (R)-4'-phosphopantothenate + ADP + H(+). The protein operates within cofactor biosynthesis; coenzyme A biosynthesis; CoA from (R)-pantothenate: step 1/5. Its function is as follows. Catalyzes the phosphorylation of pantothenate (Pan), the first step in CoA biosynthesis. The polypeptide is Type III pantothenate kinase (Burkholderia mallei (strain ATCC 23344)).